Consider the following 331-residue polypeptide: tRNA N6-adenosine threonylcarbamoyltransferase (331 aa).

Residues His109, His113, and Tyr130 each coordinate Fe cation. Substrate-binding positions include 130 to 134 (YLSGG), Asp162, Asp183, and Ser262. Residue Asp290 coordinates Fe cation.

This sequence belongs to the KAE1 / TsaD family. Requires Fe(2+) as cofactor.

It localises to the cytoplasm. It catalyses the reaction L-threonylcarbamoyladenylate + adenosine(37) in tRNA = N(6)-L-threonylcarbamoyladenosine(37) in tRNA + AMP + H(+). Its function is as follows. Required for the formation of a threonylcarbamoyl group on adenosine at position 37 (t(6)A37) in tRNAs that read codons beginning with adenine. Is probably involved in the transfer of the threonylcarbamoyl moiety of threonylcarbamoyl-AMP (TC-AMP) to the N6 group of A37. This chain is tRNA N6-adenosine threonylcarbamoyltransferase, found in Metallosphaera sedula (strain ATCC 51363 / DSM 5348 / JCM 9185 / NBRC 15509 / TH2).